The primary structure comprises 137 residues: Peptide methionine sulfoxide reductase MsrB (137 aa).

The MsrB domain maps to 7-129; it reads PGELKNGLSE…NSASLSFTDE (123 aa). The Zn(2+) site is built by Cys46, Cys49, Cys95, and Cys98. Cys118 acts as the Nucleophile in catalysis.

This sequence belongs to the MsrB Met sulfoxide reductase family. Requires Zn(2+) as cofactor.

It catalyses the reaction L-methionyl-[protein] + [thioredoxin]-disulfide + H2O = L-methionyl-(R)-S-oxide-[protein] + [thioredoxin]-dithiol. The protein is Peptide methionine sulfoxide reductase MsrB of Klebsiella pneumoniae (strain 342).